We begin with the raw amino-acid sequence, 124 residues long: Small ribosomal subunit protein uS12 (124 aa).

The tract at residues 1-22 (MATVNQLVRKPRQKPDAKSNVA) is disordered. At aspartate 89 the chain carries 3-methylthioaspartic acid.

The protein belongs to the universal ribosomal protein uS12 family. Part of the 30S ribosomal subunit. Contacts proteins S8 and S17. May interact with IF1 in the 30S initiation complex.

With S4 and S5 plays an important role in translational accuracy. Its function is as follows. Interacts with and stabilizes bases of the 16S rRNA that are involved in tRNA selection in the A site and with the mRNA backbone. Located at the interface of the 30S and 50S subunits, it traverses the body of the 30S subunit contacting proteins on the other side and probably holding the rRNA structure together. The combined cluster of proteins S8, S12 and S17 appears to hold together the shoulder and platform of the 30S subunit. The protein is Small ribosomal subunit protein uS12 of Pseudoalteromonas atlantica (strain T6c / ATCC BAA-1087).